A 176-amino-acid chain; its full sequence is Large ribosomal subunit protein uL22 (176 aa).

Residues 113–176 (VVESRPSKDQ…EISEAKGGSD (64 aa)) are disordered. Low complexity predominate over residues 136-152 (SKAAATAPAKKSSASKA). Residues 159 to 176 (TKAESKTSEISEAKGGSD) show a composition bias toward basic and acidic residues.

It belongs to the universal ribosomal protein uL22 family. As to quaternary structure, part of the 50S ribosomal subunit.

Its function is as follows. This protein binds specifically to 23S rRNA; its binding is stimulated by other ribosomal proteins, e.g. L4, L17, and L20. It is important during the early stages of 50S assembly. It makes multiple contacts with different domains of the 23S rRNA in the assembled 50S subunit and ribosome. In terms of biological role, the globular domain of the protein is located near the polypeptide exit tunnel on the outside of the subunit, while an extended beta-hairpin is found that lines the wall of the exit tunnel in the center of the 70S ribosome. The protein is Large ribosomal subunit protein uL22 of Mycobacterium ulcerans (strain Agy99).